A 310-amino-acid chain; its full sequence is tRNA dimethylallyltransferase (310 aa).

14 to 21 contributes to the ATP binding site; sequence GPTASGKS. 16 to 21 provides a ligand contact to substrate; that stretch reads TASGKS. Interaction with substrate tRNA regions lie at residues 39-42 and 163-167; these read DSMQ and QRIVR.

The protein belongs to the IPP transferase family. As to quaternary structure, monomer. Mg(2+) is required as a cofactor.

It carries out the reaction adenosine(37) in tRNA + dimethylallyl diphosphate = N(6)-dimethylallyladenosine(37) in tRNA + diphosphate. Its function is as follows. Catalyzes the transfer of a dimethylallyl group onto the adenine at position 37 in tRNAs that read codons beginning with uridine, leading to the formation of N6-(dimethylallyl)adenosine (i(6)A). This is tRNA dimethylallyltransferase from Brucella suis biovar 1 (strain 1330).